A 364-amino-acid chain; its full sequence is tRNA 2-selenouridine synthase (364 aa).

Residues 14–137 (LIADTPIIDV…LRQTAIQATI (124 aa)) form the Rhodanese domain. The active-site S-selanylcysteine intermediate is the Cys97.

It belongs to the SelU family. In terms of assembly, monomer.

The catalysed reaction is 5-methylaminomethyl-2-thiouridine(34) in tRNA + selenophosphate + (2E)-geranyl diphosphate + H2O + H(+) = 5-methylaminomethyl-2-selenouridine(34) in tRNA + (2E)-thiogeraniol + phosphate + diphosphate. It carries out the reaction 5-methylaminomethyl-2-thiouridine(34) in tRNA + (2E)-geranyl diphosphate = 5-methylaminomethyl-S-(2E)-geranyl-thiouridine(34) in tRNA + diphosphate. The enzyme catalyses 5-methylaminomethyl-S-(2E)-geranyl-thiouridine(34) in tRNA + selenophosphate + H(+) = 5-methylaminomethyl-2-(Se-phospho)selenouridine(34) in tRNA + (2E)-thiogeraniol. It catalyses the reaction 5-methylaminomethyl-2-(Se-phospho)selenouridine(34) in tRNA + H2O = 5-methylaminomethyl-2-selenouridine(34) in tRNA + phosphate. Functionally, involved in the post-transcriptional modification of the uridine at the wobble position (U34) of tRNA(Lys), tRNA(Glu) and tRNA(Gln). Catalyzes the conversion of 2-thiouridine (S2U-RNA) to 2-selenouridine (Se2U-RNA). Acts in a two-step process involving geranylation of 2-thiouridine (S2U) to S-geranyl-2-thiouridine (geS2U) and subsequent selenation of the latter derivative to 2-selenouridine (Se2U) in the tRNA chain. This is tRNA 2-selenouridine synthase from Escherichia coli (strain ATCC 8739 / DSM 1576 / NBRC 3972 / NCIMB 8545 / WDCM 00012 / Crooks).